A 99-amino-acid chain; its full sequence is A-type ATP synthase subunit F (99 aa).

The protein belongs to the V-ATPase F subunit family. As to quaternary structure, has multiple subunits with at least A(3), B(3), C, D, E, F, H, I and proteolipid K(x).

It is found in the cell membrane. Functionally, component of the A-type ATP synthase that produces ATP from ADP in the presence of a proton gradient across the membrane. This is A-type ATP synthase subunit F from Methanococcoides burtonii (strain DSM 6242 / NBRC 107633 / OCM 468 / ACE-M).